Consider the following 699-residue polypeptide: Elongation factor G (699 aa).

Positions 8 to 288 (EDYRNFGIMA…AVVDYLPSPL (281 aa)) constitute a tr-type G domain. GTP-binding positions include 17–24 (AHIDAGKT), 86–90 (DTPGH), and 140–143 (NKMD).

This sequence belongs to the TRAFAC class translation factor GTPase superfamily. Classic translation factor GTPase family. EF-G/EF-2 subfamily.

The protein resides in the cytoplasm. Functionally, catalyzes the GTP-dependent ribosomal translocation step during translation elongation. During this step, the ribosome changes from the pre-translocational (PRE) to the post-translocational (POST) state as the newly formed A-site-bound peptidyl-tRNA and P-site-bound deacylated tRNA move to the P and E sites, respectively. Catalyzes the coordinated movement of the two tRNA molecules, the mRNA and conformational changes in the ribosome. The polypeptide is Elongation factor G (Rhizobium rhizogenes (strain K84 / ATCC BAA-868) (Agrobacterium radiobacter)).